The sequence spans 191 residues: Signal peptidase complex catalytic subunit sec11 (191 aa).

The Cytoplasmic portion of the chain corresponds to 1–18; it reads MLSALGGNLSNARQSIAQ. Residues 19–39 form a helical; Signal-anchor for type II membrane protein membrane-spanning segment; the sequence is VLNFALVLSTAFMLWKGVSIA. At 40-191 the chain is on the lumenal side; it reads SNSSSPIVVV…MGLMVILQRE (152 aa). N-linked (GlcNAc...) asparagine glycosylation is present at asparagine 41. Active-site charge relay system residues include serine 53, histidine 92, and aspartate 133. A C-terminal short (CTS) helix region spans residues 177–188; sequence VLLGVMGLMVIL.

Belongs to the peptidase S26B family. Component of the signal peptidase complex (SPC) composed of a catalytic subunit SEC11 and three accessory subunits SPC1, SPC2 and SPC3. The complex induces a local thinning of the ER membrane which is used to measure the length of the signal peptide (SP) h-region of protein substrates. This ensures the selectivity of the complex towards h-regions shorter than 18-20 amino acids. SPC associates with the translocon complex.

It localises to the endoplasmic reticulum membrane. It carries out the reaction Cleavage of hydrophobic, N-terminal signal or leader sequences from secreted and periplasmic proteins.. Functionally, catalytic component of the signal peptidase complex (SPC) which catalyzes the cleavage of N-terminal signal sequences from nascent proteins as they are translocated into the lumen of the endoplasmic reticulum. Specifically cleaves N-terminal signal peptides that contain a hydrophobic alpha-helix (h-region) shorter than 18-20 amino acids. In Talaromyces marneffei (strain ATCC 18224 / CBS 334.59 / QM 7333) (Penicillium marneffei), this protein is Signal peptidase complex catalytic subunit sec11 (sec11).